A 116-amino-acid chain; its full sequence is UPF0654 protein C869.09 (116 aa).

The segment at 32-116 (LKEHGSESHY…LLEEVDDESK (85 aa)) is disordered. Positions 39–48 (SHYTTGTTRG) are enriched in polar residues. A compositionally biased stretch (basic and acidic residues) spans 49 to 64 (QKADADDAGELREEGF).

Belongs to the UPF0654 (con-6) family.

It is found in the cytoplasm. The protein resides in the nucleus. This chain is UPF0654 protein C869.09, found in Schizosaccharomyces pombe (strain 972 / ATCC 24843) (Fission yeast).